The chain runs to 200 residues: 3-isopropylmalate dehydratase small subunit (200 aa).

The protein belongs to the LeuD family. LeuD type 1 subfamily. As to quaternary structure, heterodimer of LeuC and LeuD.

The catalysed reaction is (2R,3S)-3-isopropylmalate = (2S)-2-isopropylmalate. It functions in the pathway amino-acid biosynthesis; L-leucine biosynthesis; L-leucine from 3-methyl-2-oxobutanoate: step 2/4. Its function is as follows. Catalyzes the isomerization between 2-isopropylmalate and 3-isopropylmalate, via the formation of 2-isopropylmaleate. This chain is 3-isopropylmalate dehydratase small subunit, found in Haemophilus influenzae (strain PittEE).